The primary structure comprises 366 residues: DNA replication and repair protein RecF (366 aa).

30 to 37 serves as a coordination point for ATP; that stretch reads GRNAQGKT.

This sequence belongs to the RecF family.

The protein resides in the cytoplasm. Functionally, the RecF protein is involved in DNA metabolism; it is required for DNA replication and normal SOS inducibility. RecF binds preferentially to single-stranded, linear DNA. It also seems to bind ATP. In Streptococcus thermophilus (strain CNRZ 1066), this protein is DNA replication and repair protein RecF.